Here is a 204-residue protein sequence, read N- to C-terminus: Prephenate decarboxylase (204 aa).

This sequence belongs to the prephenate decarboxylase family.

Its subcellular location is the cytoplasm. It catalyses the reaction prephenate + H(+) = 3-[(4R)-4-hydroxycyclohexa-1,5-dien-1-yl]-2-oxopropanoate + CO2. The protein operates within antibiotic biosynthesis; bacilysin biosynthesis. Its function is as follows. Part of the bacABCDEF operon responsible for the biosynthesis of the nonribosomally synthesized dipeptide antibiotic bacilysin, composed of L-alanine and L-anticapsin. Bacilysin is an irreversible inactivator of the glutaminase domain of glucosamine synthetase. BacA is an unusual prephenate decarboxylase that avoids the typical aromatization of the cyclohexadienol ring of prephenate. BacA catalyzes the protonation of prephenate (1-carboxy-4-hydroxy-alpha-oxo-2,5-cyclohexadiene-1-propanoic acid) at C6 position, followed by a decarboxylation to produce the endocyclic-delta(4),delta(8)-7R-dihydro-hydroxyphenylpyruvate (en-H2HPP). En-H2HPP is able to undergo a slow nonenzymatic isomerization to produce the exocyclic-delta(3),delta(5)-dihydro-hydroxyphenylpyruvate (ex-H2HPP). BacA isomerizes only the pro-R double bond in prephenate. The chain is Prephenate decarboxylase from Bacillus amyloliquefaciens (Bacillus velezensis).